A 628-amino-acid polypeptide reads, in one-letter code: Eukaryotic peptide chain release factor GTP-binding subunit ERF3B (628 aa).

The span at 1–10 (MDSGSSSSDS) shows a compositional bias: low complexity. Disordered stretches follow at residues 1 to 44 (MDSG…REPL), 71 to 124 (SFLR…LEGS), and 146 to 191 (LEES…KSKS). The tr-type G domain occupies 201 to 425 (KEHVNVVFIG…YLDNLPNFNR (225 aa)). Residues 210 to 217 (GHVDAGKS) form a G1 region. Residue 213–218 (DAGKST) coordinates GTP. Positions 266 to 270 (GKTVE) are G2. The segment at 287–290 (DAPG) is G3. Residues 349–352 (NKMD) and 391–393 (SGL) each bind GTP. A G4 region spans residues 349-352 (NKMD). Residues 391 to 393 (SGL) form a G5 region.

The protein belongs to the TRAFAC class translation factor GTPase superfamily. Classic translation factor GTPase family. ERF3 subfamily. Component of the eRF1-eRF3-GTP ternary complex, composed of ETF1/ERF1 and ERF3 (GSPT1/ERF3A or GSPT2/ERF3B) and GTP. Component of the transient SURF (SMG1-UPF1-eRF1-eRF3) complex. Interacts with UPF1 and PABPC1.

Its subcellular location is the cytoplasm. The catalysed reaction is GTP + H2O = GDP + phosphate + H(+). In terms of biological role, GTPase component of the eRF1-eRF3-GTP ternary complex, a ternary complex that mediates translation termination in response to the termination codons UAA, UAG and UGA. GSPT2/ERF3B mediates ETF1/ERF1 delivery to stop codons: The eRF1-eRF3-GTP complex binds to a stop codon in the ribosomal A-site. GTP hydrolysis by GSPT2/ERF3B induces a conformational change that leads to its dissociation, permitting ETF1/ERF1 to accommodate fully in the A-site. Component of the transient SURF complex which recruits UPF1 to stalled ribosomes in the context of nonsense-mediated decay (NMD) of mRNAs containing premature stop codons. In Pongo abelii (Sumatran orangutan), this protein is Eukaryotic peptide chain release factor GTP-binding subunit ERF3B (GSPT2).